The primary structure comprises 624 residues: Kelch-like ECH-associated protein 1 (624 aa).

Cys38 is modified (S-(2-succinyl)cysteine). Residues 77 to 149 (CDVTLQVKYE…AYTASISVGE (73 aa)) form the BTB domain. An N5-[4-(S-L-cysteinyl)-5-methyl-1H-imidazol-2-yl]-L-ornithine (Arg-Cys) (interchain with C-151 in KEAP1) cross-link involves residue Arg135. The residue at position 151 (Cys151) is an S-(2,3-dicarboxypropyl)cysteine; alternate. Cys151 is subject to S-(2-succinyl)cysteine; alternate. Cys151 is subject to S-nitrosocysteine; alternate. Cys151 is covalently cross-linked (N5-[4-(S-L-cysteinyl)-5-methyl-1H-imidazol-2-yl]-L-ornithine (Cys-Arg) (interchain with R-135 in KEAP1)). Positions 184–286 (AIGIANFAEQ…TPRFLQTQLQ (103 aa)) constitute a BACK domain. S-(2-succinyl)cysteine is present on Cys241. S-(2,3-dicarboxypropyl)cysteine is present on residues Cys257 and Cys273. Cys288 bears the S-(2,3-dicarboxypropyl)cysteine; alternate mark. The residue at position 288 (Cys288) is an S-(2-succinyl)cysteine; alternate. An S-(2-succinyl)cysteine modification is found at Cys319. Kelch repeat units lie at residues 327–372 (LIYT…VVGG), 373–423 (LLYA…VIDG), 424–470 (HIYA…VLNR), 471–517 (LLYA…VLHN), 519–564 (IYAA…VHQG), and 565–611 (KIYV…VTME). Cys434 bears the S-cGMP-cysteine mark. Cys613 carries the S-(2-succinyl)cysteine modification.

Belongs to the KEAP1 family. Component of the BCR(KEAP1) E3 ubiquitin ligase complex, at least composed of 2 molecules of CUL3, 2 molecules of KEAP1, and RBX1. Interacts with NFE2L2/NRF2; the interaction is direct. Forms a ternary complex with NFE2L2/NRF2 and PGAM5. Interacts with (phosphorylated) SQSTM1/p62; the interaction is direct and inactivates the BCR(KEAP1) complex by sequestering it in inclusion bodies, promoting its degradation. Interacts with NFE2L1. Interacts with BPTF and PTMA. Interacts with MAP1LC3B. Interacts indirectly with ENC1. Interacts with SESN1 and SESN2. Interacts with HSP90AA1 and HSP90AB1. Interacts with PGCKA1; this interaction prevents the ubiquitination of KEAP1 by TRIM25, thus protecting KEAP1 from degradation. In terms of processing, non-enzymatic covalent modifications of reactive cysteines by electrophile metabolites inactivate the BCR(KEAP1) complex. Accumulation of fumarate promotes the formation of cysteine S-succination (S-(2-succinyl)cysteine), leading to inactivate the BCR(KEAP1) complex and promote NFE2L2/NRF2 nuclear accumulation and activation. Nitric oxide-dependent 8-Nitro-cGMP formation promotes cysteine guanylation (S-cGMP-cysteine), leading to NFE2L2/NRF2 nuclear accumulation and activation. Itaconate, an anti-inflammatory metabolite generated in response to lipopolysaccharide, alkylates cysteines, activating NFE2L2/NRF2. Methylglyoxal, a reactive metabolite that accumulates when the glycolytic enzyme PGK1 is inhibited, promotes formation of a methylimidazole cross-link between proximal Cys-151 and Arg-135 on another KEAP1 molecule, resulting in an inactive dimer that inactivates the BCR(KEAP1) complex. Degraded via a proteasomal-independent process during selective autophagy: interaction with phosphorylated SQSTM1/p62 sequesters KEAP1 in inclusion bodies, leading to its degradation. Post-translationally, auto-ubiquitinated by the BCR(KEAP1) complex. Quinone-induced oxidative stress, but not sulforaphane, increases its ubiquitination. Ubiquitination and subsequent degradation is most pronounced following prolonged exposure of cells to oxidative stress, particularly in glutathione-deficient cells that are highly susceptible to oxidative stress. Deubiquitinated by USP25; leading to stabilization. Ubiquitinated by TRIM25; leading to degradation upon ER stress.

Its subcellular location is the cytoplasm. It is found in the nucleus. The protein operates within protein modification; protein ubiquitination. With respect to regulation, ubiquitin ligase activity of the BCR(KEAP1) complex is inhibited by oxidative stress and electrophile metabolites such as sulforaphane. Electrophile metabolites react with reactive cysteine residues in KEAP1 and trigger non-enzymatic covalent modifications of these cysteine residues, leading to inactivate the ubiquitin ligase activity of the BCR(KEAP1) complex. Selective autophagy also inactivates the BCR(KEAP1) complex via interaction between KEAP1 and SQSTM1/p62, which sequesters the complex in inclusion bodies and promotes its degradation. Functionally, substrate-specific adapter of a BCR (BTB-CUL3-RBX1) E3 ubiquitin ligase complex that regulates the response to oxidative stress by targeting NFE2L2/NRF2 for ubiquitination. KEAP1 acts as a key sensor of oxidative and electrophilic stress: in normal conditions, the BCR(KEAP1) complex mediates ubiquitination and degradation of NFE2L2/NRF2, a transcription factor regulating expression of many cytoprotective genes. In response to oxidative stress, different electrophile metabolites trigger non-enzymatic covalent modifications of highly reactive cysteine residues in KEAP1, leading to inactivate the ubiquitin ligase activity of the BCR(KEAP1) complex, promoting NFE2L2/NRF2 nuclear accumulation and expression of phase II detoxifying enzymes. In response to selective autophagy, KEAP1 is sequestered in inclusion bodies following its interaction with SQSTM1/p62, leading to inactivation of the BCR(KEAP1) complex and activation of NFE2L2/NRF2. The BCR(KEAP1) complex also mediates ubiquitination of SQSTM1/p62, increasing SQSTM1/p62 sequestering activity and degradation. The BCR(KEAP1) complex also targets BPTF and PGAM5 for ubiquitination and degradation by the proteasome. In Mus musculus (Mouse), this protein is Kelch-like ECH-associated protein 1.